Reading from the N-terminus, the 744-residue chain is Polyribonucleotide nucleotidyltransferase (744 aa).

Residues aspartate 487 and aspartate 493 each contribute to the Mg(2+) site. The region spanning 554-613 (PSTTTLKVDKDKIRDIIGPGGKVIKEICETSGAKIDISDDGTVSIYASDKDKLKVALDKV) is the KH domain. In terms of domain architecture, S1 motif spans 623–691 (GEVFNGTVMK…NKGKAKLTIK (69 aa)). The segment at 691 to 744 (KNAEKDKSSANPKPKNSPKEHQEPEKRDNGKKRAWNEDNNAETTEVVTERKYFS) is disordered. The segment covering 707–718 (SPKEHQEPEKRD) has biased composition (basic and acidic residues). Over residues 727-736 (EDNNAETTEV) the composition is skewed to polar residues.

Belongs to the polyribonucleotide nucleotidyltransferase family. It depends on Mg(2+) as a cofactor.

The protein localises to the cytoplasm. It carries out the reaction RNA(n+1) + phosphate = RNA(n) + a ribonucleoside 5'-diphosphate. In terms of biological role, involved in mRNA degradation. Catalyzes the phosphorolysis of single-stranded polyribonucleotides processively in the 3'- to 5'-direction. In Rickettsia bellii (strain OSU 85-389), this protein is Polyribonucleotide nucleotidyltransferase.